Consider the following 532-residue polypeptide: D-arabinono-1,4-lactone oxidase (532 aa).

The FAD-binding PCMH-type domain maps to 25–199; that stretch reads YSARPRLYFQ…VRATIRVVPA (175 aa). Histidine 62 bears the Pros-8alpha-FAD histidine mark.

The protein belongs to the oxygen-dependent FAD-linked oxidoreductase family. FAD serves as cofactor.

Its subcellular location is the mitochondrion membrane. The catalysed reaction is D-arabinono-1,4-lactone + O2 = dehydro-D-arabinono-1,4-lactone + H2O2 + H(+). Its pathway is cofactor biosynthesis; D-erythroascorbate biosynthesis; dehydro-D-arabinono-1,4-lactone from D-arabinose: step 2/2. This chain is D-arabinono-1,4-lactone oxidase (ALO1), found in Eremothecium gossypii (strain ATCC 10895 / CBS 109.51 / FGSC 9923 / NRRL Y-1056) (Yeast).